Here is a 352-residue protein sequence, read N- to C-terminus: Chorismate synthase (352 aa).

R48 provides a ligand contact to NADP(+). FMN-binding positions include 125-127, 238-239, G278, 293-297, and R319; these read RSS, NA, and KPTSS.

This sequence belongs to the chorismate synthase family. In terms of assembly, homotetramer. FMNH2 serves as cofactor.

It carries out the reaction 5-O-(1-carboxyvinyl)-3-phosphoshikimate = chorismate + phosphate. It functions in the pathway metabolic intermediate biosynthesis; chorismate biosynthesis; chorismate from D-erythrose 4-phosphate and phosphoenolpyruvate: step 7/7. Catalyzes the anti-1,4-elimination of the C-3 phosphate and the C-6 proR hydrogen from 5-enolpyruvylshikimate-3-phosphate (EPSP) to yield chorismate, which is the branch point compound that serves as the starting substrate for the three terminal pathways of aromatic amino acid biosynthesis. This reaction introduces a second double bond into the aromatic ring system. This chain is Chorismate synthase, found in Legionella pneumophila subsp. pneumophila (strain Philadelphia 1 / ATCC 33152 / DSM 7513).